We begin with the raw amino-acid sequence, 556 residues long: Urocanate hydratase (556 aa).

NAD(+) contacts are provided by residues 52–53, Gln-130, 176–178, Glu-196, Arg-201, 242–243, 263–267, 273–274, and Tyr-322; these read GG, GMG, NA, QTSAH, and YL. Cys-410 is a catalytic residue. Gly-492 is an NAD(+) binding site.

This sequence belongs to the urocanase family. It depends on NAD(+) as a cofactor.

Its subcellular location is the cytoplasm. The catalysed reaction is 4-imidazolone-5-propanoate = trans-urocanate + H2O. Its pathway is amino-acid degradation; L-histidine degradation into L-glutamate; N-formimidoyl-L-glutamate from L-histidine: step 2/3. In terms of biological role, catalyzes the conversion of urocanate to 4-imidazolone-5-propionate. The chain is Urocanate hydratase from Shewanella piezotolerans (strain WP3 / JCM 13877).